Consider the following 454-residue polypeptide: Epstein-Barr nuclear antigen 2 (454 aa).

Disordered stretches follow at residues 55–98 (NTGA…DASQ) and 175–454 (LQPT…TSTQ). 2 stretches are compositionally biased toward pro residues: residues 59 to 73 (PAPPQPPPPPPPPPP) and 177 to 189 (PTPPPRPTLPQPR). A compositionally biased stretch (low complexity) spans 190–203 (IPLIIPPRHTNQPA). 2 stretches are compositionally biased toward pro residues: residues 258-269 (EPLPPPAAPAHP) and 281-294 (PPTPGPPWWPPVRD). Residues 295–306 (PTPTTQTPPTNT) show a composition bias toward low complexity. Residues 317-332 (GRWRGRGRSKGRGRMH) are compositionally biased toward basic residues. A PXLXP motif, interaction with host ZMYND11 motif is present at residues 350 to 354 (PQLSP). Residues 359-368 (HQGQGPENSP) show a composition bias toward polar residues. Residues 404 to 408 (PFLFP) carry the PXLXP motif, interaction with host ZMYND11 motif.

It belongs to the herpesviridae EBNA2 family. In terms of assembly, interacts with human SMARCB1/INI1, presumably generating an open chromatin conformation at the EBNA2-responsive target genes. Interacts with human WAPL. Interacts with host CBF1; this interaction allows transcriptional activation by EBNA2. Interacts with host general transcription factors GTF2B, ERCC2 and ERCC3. Interacts (via PXLXP motif) with host ZMYND11/BS69 (via MYND-type zinc finger). Interacts with host EBF1. In terms of processing, phosphorylated.

Its subcellular location is the host nucleus matrix. Plays a key role in the activation of the host resting B-cell and stimulation of B-cell proliferation. Acts by up-regulating the expression of viral EBNA1-6, LMP1, LMP2A and LMP2B genes, as well as several host genes including CD21, CD23 and MYC. Activates transcription by acting as an adapter molecule that binds to cellular sequence-specific DNA-binding proteins such as host CBF1, SMARCB1 and SPI1. Once EBNA2 is near promoter sites, its acidic activating domain recruits basal and activation-associated transcription factors TFIIB, TAF40, TFIIH components ERCC2 and ERCC3, and CBP in order to promote transcription. Alternatively, EBNA2 can affect activities of cell cycle regulators and retard cell cycle progression at G2/M phase. It also induces chromosomal instability, by disrupting mitotic checkpoints, multi-nucleation and formation of micronuclei in infected cells. This is Epstein-Barr nuclear antigen 2 (EBNA2) from Epstein-Barr virus (strain AG876) (HHV-4).